The sequence spans 158 residues: uncharacterized protein (158 aa).

Residues 1 to 19 form the signal peptide; sequence MQKLLLAVLFFSLLAIATA. The tract at residues 82 to 158 is disordered; sequence ANPKAEAEPG…VYENDDENEE (77 aa). Residues 84–107 show a composition bias toward basic and acidic residues; the sequence is PKAEAEPGSLDKEAGTKGEKEKNG. Over residues 141–158 the composition is skewed to acidic residues; sequence DDDDDHDDVYENDDENEE.

Prismatic layer of shell (at protein level). Expressed primarily in the mantle with highest level in the mantle edge and lower level in the mantle pallium.

The protein localises to the secreted. This is an uncharacterized protein from Pinctada maxima (Silver-lipped pearl oyster).